The sequence spans 305 residues: MAATWYQVTCDVPAQLAETVADYLADLSGCGVCTENRDVDSFSPDDIPELAISQITCYFSLPCRIEQQLAQITGFLAALPGYIPAAPPRVSLLGEEDWASSWKAHFKPLAIGQRLLITPSWETGRQDEGRAVIVLDPGMAFGTGGHETTRLCLECLEGLLVPPPEQLEQIKILDLGTGSGILAIAAAKLGALQIDAVDIDPQAVIVAEENCALNKVADRISCSTTPLEQLGDGYRIILANILAEELVRMAPGIVSRMAPGGSLILSGILAEREALVRNGFDPFPLSFEASLAAGEWRCLHYRRLP.

S-adenosyl-L-methionine contacts are provided by Thr-149, Gly-176, Asp-198, and Asn-240.

This sequence belongs to the methyltransferase superfamily. PrmA family.

The protein localises to the cytoplasm. The catalysed reaction is L-lysyl-[protein] + 3 S-adenosyl-L-methionine = N(6),N(6),N(6)-trimethyl-L-lysyl-[protein] + 3 S-adenosyl-L-homocysteine + 3 H(+). Its function is as follows. Methylates ribosomal protein L11. The sequence is that of Ribosomal protein L11 methyltransferase from Trichlorobacter lovleyi (strain ATCC BAA-1151 / DSM 17278 / SZ) (Geobacter lovleyi).